Reading from the N-terminus, the 168-residue chain is GTP-dependent dephospho-CoA kinase (168 aa).

5 residues coordinate GTP: aspartate 40, valine 41, valine 42, aspartate 59, and glutamate 112.

Belongs to the GTP-dependent DPCK family.

It carries out the reaction 3'-dephospho-CoA + GTP = GDP + CoA + H(+). It functions in the pathway cofactor biosynthesis; coenzyme A biosynthesis. Functionally, catalyzes the GTP-dependent phosphorylation of the 3'-hydroxyl group of dephosphocoenzyme A to form coenzyme A (CoA). The polypeptide is GTP-dependent dephospho-CoA kinase (Methanoregula boonei (strain DSM 21154 / JCM 14090 / 6A8)).